The primary structure comprises 443 residues: Glutamyl-tRNA reductase (443 aa).

Residues 49-52 (TCNR), Ser109, 114-116 (EPQ), and Gln120 contribute to the substrate site. The active-site Nucleophile is the Cys50. 189–194 (GAGKMC) contacts NADP(+). Residues 421 to 443 (PDSQQTGGDSVEKDADSKQDLTS) form a disordered region. A compositionally biased stretch (basic and acidic residues) spans 430–443 (SVEKDADSKQDLTS).

Belongs to the glutamyl-tRNA reductase family. In terms of assembly, homodimer.

The enzyme catalyses (S)-4-amino-5-oxopentanoate + tRNA(Glu) + NADP(+) = L-glutamyl-tRNA(Glu) + NADPH + H(+). The protein operates within porphyrin-containing compound metabolism; protoporphyrin-IX biosynthesis; 5-aminolevulinate from L-glutamyl-tRNA(Glu): step 1/2. Functionally, catalyzes the NADPH-dependent reduction of glutamyl-tRNA(Glu) to glutamate 1-semialdehyde (GSA). This chain is Glutamyl-tRNA reductase, found in Syntrophotalea carbinolica (strain DSM 2380 / NBRC 103641 / GraBd1) (Pelobacter carbinolicus).